The sequence spans 713 residues: Undecaprenyl-diphosphooligosaccharide--protein glycotransferase (713 aa).

Topologically, residues 1-11 (MLKKEYLKNPY) are cytoplasmic. Residues 12 to 35 (LVLFAMIVLAYVFSVFCRFYWVWW) form a helical membrane-spanning segment. Residues 36–96 (ASEFNEYFFN…YWLYKITPFS (61 aa)) are Periplasmic-facing. The DXD motif 1 motif lies at 52-54 (SND). Aspartate 54 lines the Mn(2+) pocket. A helical transmembrane segment spans residues 97–122 (FESIILYMSTFLSSLVVIPIILLANE). The Cytoplasmic portion of the chain corresponds to 123–125 (YKR). Residues 126–144 (PLMGFVAALLASVANSYYN) traverse the membrane as a helical segment. The Periplasmic portion of the chain corresponds to 145–152 (RTMSGYYD). Residue aspartate 152 coordinates Mn(2+). The DXD motif 2 motif lies at 152 to 154 (DTD). A helical transmembrane segment spans residues 153-174 (TDMLVIVLPMFILFFMVRMILK). The Cytoplasmic portion of the chain corresponds to 175–176 (KD). A helical transmembrane segment spans residues 177–192 (FFSLIALPLFIGIYLW). At 193–197 (WYPSS) the chain is on the periplasmic side. 194–196 (YPS) is a binding site for [alpha-D-GalNAc-(1-&gt;4)]2-[beta-D-Glc-(1-&gt;3)]-[alpha-D-GalNAc-(1-&gt;4)]2-alpha-D-GalNAc-(1-&gt;3)-alpha-D-diNAcBac-tri-trans,hepta-cis-undecaprenyl diphosphate. Residues 198-215 (YTLNVALIGLFLIYTLIF) traverse the membrane as a helical segment. Residues 216–220 (HRKEK) lie on the Cytoplasmic side of the membrane. Residues 221–233 (IFYIAVILSSLTL) traverse the membrane as a helical segment. The Periplasmic segment spans residues 234–237 (SNIA). A helical transmembrane segment spans residues 238 to 254 (WFYQSAIIVILFALFAL). Topologically, residues 255–260 (EQKRLN) are cytoplasmic. A helical membrane pass occupies residues 261 to 278 (FMIIGILGSATLIFLILS). Topologically, residues 279–324 (GGVDPILYQLKFYIFRSDESANLTQGFMYFNVNQTIQEVENVDFSE) are periplasmic. Tyrosine 291 provides a ligand contact to [alpha-D-GalNAc-(1-&gt;4)]2-[beta-D-Glc-(1-&gt;3)]-[alpha-D-GalNAc-(1-&gt;4)]2-alpha-D-GalNAc-(1-&gt;3)-alpha-D-diNAcBac-tri-trans,hepta-cis-undecaprenyl diphosphate. The short motif at 313 to 316 (TIQE) is the TIXE motif element. Glutamate 316 contacts Mn(2+). The helical transmembrane segment at 325-347 (FMRRISGSEIVFLFSLFGFVWLL) threads the bilayer. At 348 to 352 (RKHKS) the chain is on the cytoplasmic side. Residues 353-369 (MIMALPILVLGFLALKG) traverse the membrane as a helical segment. Residues 370–373 (GLRF) lie on the Periplasmic side of the membrane. Arginine 372 lines the [alpha-D-GalNAc-(1-&gt;4)]2-[beta-D-Glc-(1-&gt;3)]-[alpha-D-GalNAc-(1-&gt;4)]2-alpha-D-GalNAc-(1-&gt;3)-alpha-D-diNAcBac-tri-trans,hepta-cis-undecaprenyl diphosphate pocket. A helical membrane pass occupies residues 374–396 (TIYSVPVMALGFGFLLSEFKAIL). Over 397-406 (VKKYSQLTSN) the chain is Cytoplasmic. Residues 407–427 (VCIVFATILTLAPVFIHIYNY) traverse the membrane as a helical segment. Residues 428-713 (KAPTVFSQNE…RDAKVFKLKI (286 aa)) are Periplasmic-facing. Positions 457-459 (WWD) are interacts with target acceptor peptide in protein substrate. A WWDYG motif motif is present at residues 457–461 (WWDYG). Tyrosine 462 is a [alpha-D-GalNAc-(1-&gt;4)]2-[beta-D-Glc-(1-&gt;3)]-[alpha-D-GalNAc-(1-&gt;4)]2-alpha-D-GalNAc-(1-&gt;3)-alpha-D-diNAcBac-tri-trans,hepta-cis-undecaprenyl diphosphate binding site. Asparagine 534 is a glycosylation site (N-linked (DATDGlc) asparagine). Positions 568-575 (MSLIFSTV) match the MI motif motif.

This sequence belongs to the STT3 family. It depends on Mg(2+) as a cofactor. Mn(2+) is required as a cofactor.

The protein resides in the cell inner membrane. The catalysed reaction is tritrans,heptacis-undecaprenyl diphosphooligosaccharide + [protein]-L-asparagine = tritrans,heptacis-undecaprenyl diphosphate + a glycoprotein with the oligosaccharide chain attached by N-beta-D-glycosyl linkage to protein L-asparagine.. Its pathway is protein modification; protein glycosylation. In terms of biological role, oligosaccharyl transferase (OST) that catalyzes the initial transfer of a defined glycan (GalNAc(2)GlcGalNAc(3)Bac(NAc)(2) in eubacteria, where Bac(NAc)(2) is di-N-acetyl bacillosamine) from the lipid carrier undecaprenol-pyrophosphate to an asparagine residue within an Asp/Glu-Asn-X-Ser/Thr consensus motif in nascent polypeptide chains, the first step in protein N-glycosylation. This chain is Undecaprenyl-diphosphooligosaccharide--protein glycotransferase (pglB), found in Campylobacter jejuni subsp. jejuni serotype O:2 (strain ATCC 700819 / NCTC 11168).